The chain runs to 305 residues: Probable xyloglucan endotransglucosylase/hydrolase protein 8 (305 aa).

Positions 1 to 31 are cleaved as a signal peptide; that stretch reads METERRIITSCSAMTALFLFMTALMASSSIA. In terms of domain architecture, GH16 spans 32–231; the sequence is ATPTQSFEDN…WKKAPFVSSY (200 aa). N-linked (GlcNAc...) asparagine glycans are attached at residues Asn61 and Asn66. Glu115 (nucleophile) is an active-site residue. The active-site Proton donor is the Glu119. Glu119 is a binding site for xyloglucan. N-linked (GlcNAc...) asparagine glycosylation occurs at Asn123. Residue 132 to 134 participates in xyloglucan binding; that stretch reads QTN. The N-linked (GlcNAc...) asparagine glycan is linked to Asn138. Xyloglucan contacts are provided by residues 142-144, 210-211, and Gly215; these read NRE and DW. Disulfide bonds link Cys239-Cys248 and Cys286-Cys299. Arg291 contributes to the xyloglucan binding site.

It belongs to the glycosyl hydrolase 16 family. XTH group 1 subfamily. In terms of processing, contains at least one intrachain disulfide bond essential for its enzymatic activity.

The protein resides in the secreted. Its subcellular location is the cell wall. It is found in the extracellular space. The protein localises to the apoplast. It carries out the reaction breaks a beta-(1-&gt;4) bond in the backbone of a xyloglucan and transfers the xyloglucanyl segment on to O-4 of the non-reducing terminal glucose residue of an acceptor, which can be a xyloglucan or an oligosaccharide of xyloglucan.. Its function is as follows. Catalyzes xyloglucan endohydrolysis (XEH) and/or endotransglycosylation (XET). Cleaves and religates xyloglucan polymers, an essential constituent of the primary cell wall, and thereby participates in cell wall construction of growing tissues. The chain is Probable xyloglucan endotransglucosylase/hydrolase protein 8 (XTH8) from Arabidopsis thaliana (Mouse-ear cress).